The primary structure comprises 437 residues: U1 small nuclear ribonucleoprotein 70 kDa (437 aa).

T2 is subject to N-acetylthreonine. The disordered stretch occupies residues 48-79 (FEDPRDAPPPTRAETREERMERKRREKIERRQ). Residues 60 to 79 (AETREERMERKRREKIERRQ) are compositionally biased toward basic and acidic residues. Positions 92–202 (HNDPNAQGDA…GGGLGGTRRG (111 aa)) are required for interaction with U1 RNA. Residues 103–181 (KTLFVARVNY…RRVLVDVERG (79 aa)) form the RRM domain. At K118 the chain carries N6-acetyllysine. Y126 is subject to Phosphotyrosine. The interval 187–437 (WRPRRLGGGL…NGYLMEAAPE (251 aa)) is disordered. The segment covering 192-201 (LGGGLGGTRR) has biased composition (gly residues). The segment covering 207–254 (NIRHSGRDDTSRYDERPGPSPLPHRDRDRDRERERRERSRERDKERER) has biased composition (basic and acidic residues). Phosphoserine is present on residues S226 and S268. Over residues 255 to 268 (RRSRSRDRRRRSRS) the composition is skewed to basic residues. Composition is skewed to basic and acidic residues over residues 269–286 (RDKE…DKDR) and 294–310 (RSRE…EELR). S320 is modified (phosphoserine). Over residues 343–393 (PEEKGRDRDRERRRSHRSERERRRDRDRDRDRDREHKRGERGSERGRDEAR) the composition is skewed to basic and acidic residues. K346 participates in a covalent cross-link: Glycyl lysine isopeptide (Lys-Gly) (interchain with G-Cter in SUMO2). S410 carries the post-translational modification Phosphoserine.

Component of the U1 snRNP. The U1 snRNP is composed of the U1 snRNA and the 7 core Sm proteins SNRPB, SNRPD1, SNRPD2, SNRPD3, SNRPE, SNRPF and SNRPG that assemble in a heptameric protein ring on the Sm site of the small nuclear RNA to form the core snRNP, and at least three U1 snRNP-specific proteins SNRNP70/U1-70K, SNRPA/U1-A and SNRPC/U1-C. Interacts with SCNM1. Found in a pre-mRNA splicing complex with SFRS4, SFRS5, SNRNP70, SNRPA1, SRRM1 and SRRM2. Found in a pre-mRNA exonic splicing enhancer (ESE) complex with SNRNP70, SNRPA1, SRRM1 and TRA2B/SFRS10. Interacts with dephosphorylated SFRS13A and SFPQ. Interacts with NUDT21/CPSF5, CPSF6, SCAF11, and ZRANB2. Interacts with GEMIN5. Interacts with FUS. The N-terminus is blocked. Post-translationally, extensively phosphorylated on serine residues in the C-terminal region.

It localises to the nucleus speckle. It is found in the nucleus. Its subcellular location is the nucleoplasm. In terms of biological role, component of the spliceosomal U1 snRNP, which is essential for recognition of the pre-mRNA 5' splice-site and the subsequent assembly of the spliceosome. SNRNP70 binds to the loop I region of U1-snRNA. Truncated isoforms that lack the RRM domain cannot bind U1-snRNA. The sequence is that of U1 small nuclear ribonucleoprotein 70 kDa (SNRNP70) from Homo sapiens (Human).